The chain runs to 473 residues: Serine carboxypeptidase-like 42 (473 aa).

Positions 1–26 are cleaved as a signal peptide; the sequence is MASVSWRAVAVAMVVVLLSLQWFAKG. 3 cysteine pairs are disulfide-bonded: Cys87–Cys346, Cys247–Cys264, and Cys289–Cys314. An N-linked (GlcNAc...) asparagine glycan is attached at Asn138. Ser179 is a catalytic residue. N-linked (GlcNAc...) asparagine glycosylation occurs at Asn259. N-linked (GlcNAc...) asparagine glycosylation is found at Asn335 and Asn351. Residues Asp383 and His440 contribute to the active site. The N-linked (GlcNAc...) asparagine glycan is linked to Asn465.

Belongs to the peptidase S10 family. As to expression, expression not detected.

Its subcellular location is the secreted. Its function is as follows. Probable carboxypeptidase. This chain is Serine carboxypeptidase-like 42 (SCPL42), found in Arabidopsis thaliana (Mouse-ear cress).